We begin with the raw amino-acid sequence, 258 residues long: Thiamine thiazole synthase (258 aa).

Residues serine 36, 55–56 (ER), glycine 63, valine 127, and 153–155 (HVD) contribute to the NAD(+) site. 2 residues coordinate Fe cation: aspartate 155 and histidine 170. Methionine 224 serves as a coordination point for NAD(+). Arginine 234 contributes to the glycine binding site.

The protein belongs to the THI4 family. In terms of assembly, homooctamer; tetramer of dimers. Fe(2+) is required as a cofactor.

The enzyme catalyses hydrogen sulfide + glycine + NAD(+) = ADP-5-ethyl-4-methylthiazole-2-carboxylate + nicotinamide + 3 H2O + H(+). The protein operates within cofactor biosynthesis; thiamine diphosphate biosynthesis. Its function is as follows. Involved in the biosynthesis of the thiazole moiety of thiamine. Catalyzes the conversion of NAD and glycine to adenosine diphosphate 5-(2-hydroxyethyl)-4-methylthiazole-2-carboxylate (ADT), an adenylated thiazole intermediate, using free sulfide as a source of sulfur. The polypeptide is Thiamine thiazole synthase (Desulfosudis oleivorans (strain DSM 6200 / JCM 39069 / Hxd3) (Desulfococcus oleovorans)).